The primary structure comprises 122 residues: Large ribosomal subunit protein uL14 (122 aa).

This sequence belongs to the universal ribosomal protein uL14 family. As to quaternary structure, part of the 50S ribosomal subunit. Forms a cluster with proteins L3 and L19. In the 70S ribosome, L14 and L19 interact and together make contacts with the 16S rRNA in bridges B5 and B8.

Binds to 23S rRNA. Forms part of two intersubunit bridges in the 70S ribosome. This Clostridium perfringens (strain ATCC 13124 / DSM 756 / JCM 1290 / NCIMB 6125 / NCTC 8237 / Type A) protein is Large ribosomal subunit protein uL14.